Reading from the N-terminus, the 865-residue chain is MASQYPGHQLDDIPSTNVYRPPPRHEDDEAEHALLHQNSAYQSQYDDPHSRPLTPGQESVYTLNESYVGGDPSKVPVTSYNPQYTQPYGQGYGMNNSRPGFPTPGPPDPIDRTDSTEAWRERQAPGFGTIKRYATRKVKLVQGSVLSIDYPVPSAIQNAIQAKYRNDLEGGSEEFTHMRYTAATCDPDDFTLKNGYNLRPAMYNRHTELLIAITYYNEDKVLTARTLHGVMQNIRDIVNLKKSEFWNKGGPAWQKIVVCLVFDGIDPCDKNTLDVLATIGVYQDGVMKKDVDGKETVAHIFEYTTQLSVTANQQLIRPNDNDATSLPPAQMIFCLKQKNSKKINSHRWLFNAFGRILNPEVCILLDAGTKPGSKSLMALWQAFYNDKDLGGACGEIHAMLGPGGVFGRKLLNPLVAAQNFEYKISNILDKPLESSFGYVSVLPGAFSAYRFRAIMGRPLEQYFHGDHTLSKRLGKKGIEGMNIFKKNMFLAEDRILCFELVAKAGSKWHLSYVKASKAETDVPEGAPEFIGQRRRWLNGSFAASIYSLMHFSRMYKSGHNLIRMFFLHIQMIYNIVSVLLSWFSLASFWLTTKVLMDLVGQPSTSNDNSAFPFGNTATPIINTILQYLYLAFLLLQFILALGNRPKGSKVAYIISFCLFGLIQLYVIVLSMYLVVRAFTTKNGTDIVTNEGANEFVKSFFASTGPGIVIIALAATFGLYFVASFLYMDPWHMFTSFAQYLLLMPSFINILMIYAFSNWHDVSWGTKGSDKADVLPSAQTKKDEKSKTAVVEEVDKPQADIDSQFEATVRRALAPYKPPEEKEEKTLEDSYKNFRTRLVATWIFSNALLAVAITSDSLDRFGFTVR.

The interval 1–59 (MASQYPGHQLDDIPSTNVYRPPPRHEDDEAEHALLHQNSAYQSQYDDPHSRPLTPGQES) is disordered. The segment covering 23–34 (PRHEDDEAEHAL) has biased composition (basic and acidic residues). The segment covering 36 to 45 (HQNSAYQSQY) has biased composition (polar residues). N-linked (GlcNAc...) asparagine glycans are attached at residues Asn-64, Asn-95, and Asn-538. 3 helical membrane-spanning segments follow: residues 565–585 (FFLHIQMIYNIVSVLLSWFSL), 620–640 (IINTILQYLYLAFLLLQFILA), and 650–670 (VAYIISFCLFGLIQLYVIVLS). Residue Asn-682 is glycosylated (N-linked (GlcNAc...) asparagine). The next 3 membrane-spanning stretches (helical) occupy residues 707–727 (IVIIALAATFGLYFVASFLYM), 735–755 (SFAQYLLLMPSFINILMIYAF), and 837–857 (LVATWIFSNALLAVAITSDSL).

It belongs to the chitin synthase family. Class III subfamily.

The protein localises to the cell membrane. The catalysed reaction is [(1-&gt;4)-N-acetyl-beta-D-glucosaminyl](n) + UDP-N-acetyl-alpha-D-glucosamine = [(1-&gt;4)-N-acetyl-beta-D-glucosaminyl](n+1) + UDP + H(+). In terms of biological role, polymerizes chitin, a structural polymer of the cell wall and septum, by transferring the sugar moiety of UDP-GlcNAc to the non-reducing end of the growing chitin polymer. Is not only stable at different pH, but is also able to tolerate a broad temperature range. With CHS2, plays an important role in virulence. The chain is Chitin synthase 3 from Exophiala dermatitidis (strain ATCC 34100 / CBS 525.76 / NIH/UT8656) (Black yeast).